The primary structure comprises 445 residues: Anaerobilin synthase (445 aa).

Positions 52 to 287 constitute a Radical SAM core domain; it reads TASPRKRLVY…LQGCDFMDDA (236 aa). Tyrosine 61 contributes to the S-adenosyl-L-methionine binding site. Positions 67 and 71 each coordinate [4Fe-4S] cluster. Phenylalanine 73 contacts S-adenosyl-L-methionine. [4Fe-4S] cluster is bound at residue cysteine 74. Residues glycine 118, 119–120, glutamate 151, glutamine 178, arginine 190, and aspartate 215 contribute to the S-adenosyl-L-methionine site; that span reads GT.

This sequence belongs to the anaerobic coproporphyrinogen-III oxidase family. ChuW/HutW subfamily. [4Fe-4S] cluster is required as a cofactor.

It catalyses the reaction 2 reduced [flavodoxin] + heme b + 2 S-adenosyl-L-methionine = anaerobilin + 2 oxidized [flavodoxin] + Fe(2+) + 5'-deoxyadenosine + L-methionine + S-adenosyl-L-homocysteine. Inhibited by exposure to molecular oxygen. Its function is as follows. Involved in heme degradation and iron utilization under anaerobic conditions. Catalyzes a radical-mediated mechanism facilitating iron liberation and the production of the tetrapyrrole product anaerobilin. Can use heme, mesoheme and deuteroheme as substrates. The chain is Anaerobilin synthase from Escherichia coli O157:H7.